We begin with the raw amino-acid sequence, 508 residues long: Photosystem II CP47 reaction center protein (508 aa).

Transmembrane regions (helical) follow at residues 21–36 (AVHL…WAGS), 101–115 (ITLS…IWHW), 140–156 (GIHL…FGAF), 203–218 (IAAG…FHLS), 237–252 (VLSS…AFVV), and 457–472 (TFAL…HGAR).

It belongs to the PsbB/PsbC family. PsbB subfamily. In terms of assembly, PSII is composed of 1 copy each of membrane proteins PsbA, PsbB, PsbC, PsbD, PsbE, PsbF, PsbH, PsbI, PsbJ, PsbK, PsbL, PsbM, PsbT, PsbX, PsbY, PsbZ, Psb30/Ycf12, at least 3 peripheral proteins of the oxygen-evolving complex and a large number of cofactors. It forms dimeric complexes. Binds multiple chlorophylls. PSII binds additional chlorophylls, carotenoids and specific lipids. serves as cofactor.

The protein localises to the plastid. The protein resides in the chloroplast thylakoid membrane. Its function is as follows. One of the components of the core complex of photosystem II (PSII). It binds chlorophyll and helps catalyze the primary light-induced photochemical processes of PSII. PSII is a light-driven water:plastoquinone oxidoreductase, using light energy to abstract electrons from H(2)O, generating O(2) and a proton gradient subsequently used for ATP formation. This is Photosystem II CP47 reaction center protein from Psilotum nudum (Whisk fern).